The primary structure comprises 867 residues: FO synthase (867 aa).

Residues 1 to 22 form a disordered region; that stretch reads MTTSATSGTGPADPAGPTENSM. Radical SAM core domains lie at 75–325 and 534–769; these read ITYS…LQAP and VTYI…LLHP. Residues 76-407 are cofG-like; the sequence is TYSKSVFVPL…PRLRPHVAAL (332 aa). Residues Cys-89, Cys-93, Cys-96, Cys-548, Cys-552, and Cys-555 each contribute to the [4Fe-4S] cluster site. Positions 511–844 are cofH-like; sequence EGPALDALCG…KPRTTLYGPV (334 aa). Residues 835-867 are disordered; the sequence is KPRTTLYGPVPEERQRAARDSDGHLPELLPVLD. Over residues 845 to 859 the composition is skewed to basic and acidic residues; that stretch reads PEERQRAARDSDGHL.

It in the N-terminal section; belongs to the radical SAM superfamily. CofG family. This sequence in the C-terminal section; belongs to the radical SAM superfamily. CofH family. [4Fe-4S] cluster is required as a cofactor.

The enzyme catalyses 5-amino-6-(D-ribitylamino)uracil + L-tyrosine + S-adenosyl-L-methionine = 5-amino-5-(4-hydroxybenzyl)-6-(D-ribitylimino)-5,6-dihydrouracil + 2-iminoacetate + 5'-deoxyadenosine + L-methionine + H(+). It catalyses the reaction 5-amino-5-(4-hydroxybenzyl)-6-(D-ribitylimino)-5,6-dihydrouracil + S-adenosyl-L-methionine = 7,8-didemethyl-8-hydroxy-5-deazariboflavin + 5'-deoxyadenosine + L-methionine + NH4(+) + H(+). It participates in cofactor biosynthesis; coenzyme F0 biosynthesis. Catalyzes the radical-mediated synthesis of 7,8-didemethyl-8-hydroxy-5-deazariboflavin (FO) from 5-amino-6-(D-ribitylamino)uracil and L-tyrosine. This chain is FO synthase (fbiC), found in Streptomyces coelicolor (strain ATCC BAA-471 / A3(2) / M145).